The primary structure comprises 224 residues: 7-cyano-7-deazaguanine synthase (224 aa).

14-24 is a binding site for ATP; the sequence is FSGGQDSTTCL. 4 residues coordinate Zn(2+): Cys-190, Cys-198, Cys-201, and Cys-204.

The protein belongs to the QueC family. Requires Zn(2+) as cofactor.

The enzyme catalyses 7-carboxy-7-deazaguanine + NH4(+) + ATP = 7-cyano-7-deazaguanine + ADP + phosphate + H2O + H(+). It functions in the pathway purine metabolism; 7-cyano-7-deazaguanine biosynthesis. Catalyzes the ATP-dependent conversion of 7-carboxy-7-deazaguanine (CDG) to 7-cyano-7-deazaguanine (preQ(0)). This is 7-cyano-7-deazaguanine synthase from Haemophilus ducreyi (strain 35000HP / ATCC 700724).